Here is a 278-residue protein sequence, read N- to C-terminus: Outer spore wall protein 1 (278 aa).

It localises to the spore wall. May be involved in a late step of spore wall assembly. The protein is Outer spore wall protein 1 (OSW1) of Saccharomyces cerevisiae (strain ATCC 204508 / S288c) (Baker's yeast).